Here is a 217-residue protein sequence, read N- to C-terminus: 3,4-dihydroxy-2-butanone 4-phosphate synthase (217 aa).

Residues R37–E38, D42, R150–T154, and E174 each bind D-ribulose 5-phosphate. Residue E38 coordinates Mg(2+). H153 serves as a coordination point for Mg(2+).

This sequence belongs to the DHBP synthase family. Homodimer. It depends on Mg(2+) as a cofactor. Mn(2+) serves as cofactor.

It carries out the reaction D-ribulose 5-phosphate = (2S)-2-hydroxy-3-oxobutyl phosphate + formate + H(+). It participates in cofactor biosynthesis; riboflavin biosynthesis; 2-hydroxy-3-oxobutyl phosphate from D-ribulose 5-phosphate: step 1/1. Catalyzes the conversion of D-ribulose 5-phosphate to formate and 3,4-dihydroxy-2-butanone 4-phosphate. This Salmonella heidelberg (strain SL476) protein is 3,4-dihydroxy-2-butanone 4-phosphate synthase.